A 1014-amino-acid polypeptide reads, in one-letter code: Beta-galactosidase (1014 aa).

The active-site Proton donor is Glu-460. Residue Glu-527 is the Nucleophile of the active site.

Belongs to the glycosyl hydrolase 2 family.

It catalyses the reaction Hydrolysis of terminal non-reducing beta-D-galactose residues in beta-D-galactosides.. The protein is Beta-galactosidase (lacZ) of Halalkalibacterium halodurans (strain ATCC BAA-125 / DSM 18197 / FERM 7344 / JCM 9153 / C-125) (Bacillus halodurans).